A 207-amino-acid polypeptide reads, in one-letter code: ATP synthase subunit b 2 (207 aa).

The segment covering 1-31 has biased composition (low complexity); that stretch reads MVAQAAPPAGTAGQGTHEAASAAHGAAAAHG. The disordered stretch occupies residues 1–41; that stretch reads MVAQAAPPAGTAGQGTHEAASAAHGAAAAHGAAEEGHGKKS. Residues 48-70 traverse the membrane as a helical segment; sequence ATTFASQLLWLVLSFGLLYLLMS.

Belongs to the ATPase B chain family. As to quaternary structure, F-type ATPases have 2 components, F(1) - the catalytic core - and F(0) - the membrane proton channel. F(1) has five subunits: alpha(3), beta(3), gamma(1), delta(1), epsilon(1). F(0) has three main subunits: a(1), b(2) and c(10-14). The alpha and beta chains form an alternating ring which encloses part of the gamma chain. F(1) is attached to F(0) by a central stalk formed by the gamma and epsilon chains, while a peripheral stalk is formed by the delta and b chains.

Its subcellular location is the cell inner membrane. Functionally, f(1)F(0) ATP synthase produces ATP from ADP in the presence of a proton or sodium gradient. F-type ATPases consist of two structural domains, F(1) containing the extramembraneous catalytic core and F(0) containing the membrane proton channel, linked together by a central stalk and a peripheral stalk. During catalysis, ATP synthesis in the catalytic domain of F(1) is coupled via a rotary mechanism of the central stalk subunits to proton translocation. Its function is as follows. Component of the F(0) channel, it forms part of the peripheral stalk, linking F(1) to F(0). In Xanthobacter autotrophicus (strain ATCC BAA-1158 / Py2), this protein is ATP synthase subunit b 2.